Here is a 191-residue protein sequence, read N- to C-terminus: uncharacterized protein (191 aa).

5 consecutive transmembrane segments (helical) span residues 24 to 44 (IVRGLIDGSLSALGVVIGASG), 51 to 71 (IIAAGLGGGIANGLSNILGAF), 114 to 134 (LIDGISTTIGSALPVVPFFLF), 139 to 159 (ALYVAIGITIAILFILGVFIG), and 167 to 187 (IISGIKMVAGALAVAILCFMI).

It is found in the cell membrane. This is an uncharacterized protein from Methanocaldococcus jannaschii (strain ATCC 43067 / DSM 2661 / JAL-1 / JCM 10045 / NBRC 100440) (Methanococcus jannaschii).